The following is a 175-amino-acid chain: NADH dehydrogenase [ubiquinone] iron-sulfur protein 4, mitochondrial (175 aa).

The N-terminal 42 residues, 1-42, are a transit peptide targeting the mitochondrion; it reads MAAVSISVSLRQAMLGRRAMATAAVSVCRVPSRLLSTSTWKL. At Ser-173 the chain carries Phosphoserine.

This sequence belongs to the complex I NDUFS4 subunit family. In terms of assembly, this is a component of the iron-sulfur (IP) fragment of the enzyme. Interacts with BCAP31 and TOMM40; the interaction mediates its translocation to the mitochondria; the interaction with BCAP31 is direct.

It is found in the mitochondrion inner membrane. In terms of biological role, accessory subunit of the mitochondrial membrane respiratory chain NADH dehydrogenase (Complex I), that is believed not to be involved in catalysis. Complex I functions in the transfer of electrons from NADH to the respiratory chain. The immediate electron acceptor for the enzyme is believed to be ubiquinone. This chain is NADH dehydrogenase [ubiquinone] iron-sulfur protein 4, mitochondrial (Ndufs4), found in Mus musculus (Mouse).